Reading from the N-terminus, the 297-residue chain is MTFPILILAAPTGAGKTSLITELDPTRFEILSFDSRQIYREMPIGTAAPTKEQQSKIRHHLVEVLSPKESIDAGLYNRMAEEALQKVLNTDKIPVFTAGTGFYLKAFLFGMFPVPEISVSVRERVLSMSIEEKKVLLNDLDPEALDKIFSGDDYRLGRALEVNLMGEKWSRLKIDPNTSAIYKYNLEIRLGIFLDLDRKELYERINLRAKRMIDLGMADEAWEIRERYGESCPGLKSLGYNFALENKKGNSNVETFLVDLSQSHRNYAKRQITWFRKENYIQAMDRSEALERIKHIK.

10 to 17 (APTGAGKT) is a binding site for ATP. Substrate is bound at residue 12-17 (TGAGKT). The segment at 34–37 (DSRQ) is interaction with substrate tRNA.

The protein belongs to the IPP transferase family. As to quaternary structure, monomer. Requires Mg(2+) as cofactor.

It catalyses the reaction adenosine(37) in tRNA + dimethylallyl diphosphate = N(6)-dimethylallyladenosine(37) in tRNA + diphosphate. Functionally, catalyzes the transfer of a dimethylallyl group onto the adenine at position 37 in tRNAs that read codons beginning with uridine, leading to the formation of N6-(dimethylallyl)adenosine (i(6)A). The chain is tRNA dimethylallyltransferase from Leptospira interrogans serogroup Icterohaemorrhagiae serovar Lai (strain 56601).